The chain runs to 200 residues: Probable GTP-binding protein EngB (200 aa).

The 175-residue stretch at 26-200 folds into the EngB-type G domain; that stretch reads SIPEIAIAGR…IYEIAQCIKK (175 aa). Residues 34–41, 61–65, 80–83, 147–150, and 179–181 each bind GTP; these read GRSNVGKS, GCTKQ, DLPG, TKID, and TSS. 2 residues coordinate Mg(2+): Ser41 and Thr63.

The protein belongs to the TRAFAC class TrmE-Era-EngA-EngB-Septin-like GTPase superfamily. EngB GTPase family. Requires Mg(2+) as cofactor.

In terms of biological role, necessary for normal cell division and for the maintenance of normal septation. The polypeptide is Probable GTP-binding protein EngB (Ehrlichia chaffeensis (strain ATCC CRL-10679 / Arkansas)).